A 124-amino-acid polypeptide reads, in one-letter code: Ribonuclease pancreatic (124 aa).

Residues 1-13 (KESAAAKFERQHM) are compositionally biased toward basic and acidic residues. The segment at 1–25 (KESAAAKFERQHMDPSPSSASSSNY) is disordered. Substrate contacts are provided by Lys-7 and Arg-10. His-12 (proton acceptor) is an active-site residue. 4 disulfides stabilise this stretch: Cys-26/Cys-84, Cys-40/Cys-95, Cys-58/Cys-110, and Cys-65/Cys-72. An N-linked (GlcNAc...) asparagine; partial glycan is attached at Asn-34. Residues 41-45 (KPVNT), Lys-66, and Arg-85 each bind substrate. His-119 (proton donor) is an active-site residue.

This sequence belongs to the pancreatic ribonuclease family. Monomer. Interacts with and forms tight 1:1 complexes with RNH1. Dimerization of two such complexes may occur. Interaction with RNH1 inhibits this protein. Pancreas.

The protein localises to the secreted. The catalysed reaction is an [RNA] containing cytidine + H2O = an [RNA]-3'-cytidine-3'-phosphate + a 5'-hydroxy-ribonucleotide-3'-[RNA].. It carries out the reaction an [RNA] containing uridine + H2O = an [RNA]-3'-uridine-3'-phosphate + a 5'-hydroxy-ribonucleotide-3'-[RNA].. In terms of biological role, endonuclease that catalyzes the cleavage of RNA on the 3' side of pyrimidine nucleotides. Acts on single-stranded and double-stranded RNA. This is Ribonuclease pancreatic (RNASE1) from Capreolus capreolus (European roe deer).